The chain runs to 118 residues: Putative pterin-4-alpha-carbinolamine dehydratase (118 aa).

It belongs to the pterin-4-alpha-carbinolamine dehydratase family.

The enzyme catalyses (4aS,6R)-4a-hydroxy-L-erythro-5,6,7,8-tetrahydrobiopterin = (6R)-L-erythro-6,7-dihydrobiopterin + H2O. The sequence is that of Putative pterin-4-alpha-carbinolamine dehydratase from Pseudomonas putida (strain GB-1).